We begin with the raw amino-acid sequence, 362 residues long: MKASILTKLETLVERYEEVQHLLGDPDVIGNQDKFRALSKEYSQLEEVTKCFQAYQQAQDDLAAAEDMANEDDEEMREMAQEEIKEAKEAIERLTDELQILLLPKDPNDDRNCFLEIRAGAGGDEAGIFAGDLFRMYSKYAEKRGWRIEVMSSNEAEHGGYKEMIAKVSGDGAYGVLKFESGGHRVQRVPATESQGRVHTSACTVAVMAEIPEADLPEIKAADLKIDTFRASGAGGQHVNTTDSAIRITHLPTGTVVECQDERSQHKNKAKAMAVLAARIVQAEEERRAAEVSDTRRNLLGSGDRSDRIRTYNYPQGRVSDHRINLTIYRLNEVMEGDLQSLIDPVVQEHQADQLAALAENG.

Q237 bears the N5-methylglutamine mark.

It belongs to the prokaryotic/mitochondrial release factor family. Methylated by PrmC. Methylation increases the termination efficiency of RF1.

Its subcellular location is the cytoplasm. Functionally, peptide chain release factor 1 directs the termination of translation in response to the peptide chain termination codons UAG and UAA. The polypeptide is Peptide chain release factor 1 (Vibrio campbellii (strain ATCC BAA-1116)).